The following is a 168-amino-acid chain: Putative defense protein 1 (168 aa).

Positions methionine 1–alanine 18 are cleaved as a signal peptide. One can recognise a Reelin domain in the interval phenylalanine 19–histidine 168. Cysteine 28 and cysteine 105 are oxidised to a cystine.

This sequence belongs to the insect defense protein family. In terms of tissue distribution, very highly expressed in midgut, and highly expressed in fat body, silk gland and epidermis.

Its subcellular location is the secreted. Functionally, as this protein is expressed upon bacterial infection, it may have antimicrobial activity. The chain is Putative defense protein 1 from Antheraea mylitta (Tasar silkworm).